A 146-amino-acid chain; its full sequence is 3-dehydroquinate dehydratase (146 aa).

Tyr-22 (proton acceptor) is an active-site residue. Residues Asn-74, His-80, and Asp-87 each coordinate substrate. Catalysis depends on His-100, which acts as the Proton donor. Substrate is bound by residues Leu-101–Ser-102 and Arg-111.

Belongs to the type-II 3-dehydroquinase family. As to quaternary structure, homododecamer.

The catalysed reaction is 3-dehydroquinate = 3-dehydroshikimate + H2O. It functions in the pathway metabolic intermediate biosynthesis; chorismate biosynthesis; chorismate from D-erythrose 4-phosphate and phosphoenolpyruvate: step 3/7. In terms of biological role, catalyzes a trans-dehydration via an enolate intermediate. This Clostridium perfringens (strain 13 / Type A) protein is 3-dehydroquinate dehydratase.